The primary structure comprises 758 residues: Spastin (758 aa).

Residues 1–103 (MVRTKNQSSS…SPRSGHHHSY (103 aa)) are disordered. Topologically, residues 1-121 (MVRTKNQSSS…KQNLYVVSFP (121 aa)) are cytoplasmic. Residues 1-210 (MVRTKNQSSS…RPIQPLEMAA (210 aa)) are required for localization to punctate cytoplasmic foci. Composition is skewed to low complexity over residues 8-28 (SSSS…SSGA), 43-58 (RSSS…AGGS), 66-76 (SSNRRSPGSSP), and 85-95 (TDDLTPTTCSP). The helical intramembrane region spans 122–142 (IIFLFNVLRSLIYQLFCIFRY). At 143–758 (LYGASTKVIY…WSQDYGDITI (616 aa)) the chain is on the cytoplasmic side. Polar residues-rich tracts occupy residues 169–180 (SKEQQQSLNHPS) and 189–198 (QEQQLSNQPQ). Positions 169–202 (SKEQQQSLNHPSELNREGDGQEQQLSNQPQRFRP) are disordered. A sufficient for interaction with microtubules and microtubule severing region spans residues 208 to 758 (MAANRPGGGY…WSQDYGDITI (551 aa)). The region spanning 233-308 (HRRAFEYISK…SMARDRLHFL (76 aa)) is the MIT domain. A compositionally biased stretch (basic and acidic residues) spans 323-339 (KEKQKEEARSKPQKSRE). Residues 323-454 (KEKQKEEARS…GPSGSGASTP (132 aa)) form a disordered region. Polar residues-rich tracts occupy residues 390 to 406 (NKSQ…TSVG) and 425 to 454 (QFSS…ASTP). The interval 443–455 (NNGPSGSGASTPV) is required for interaction with microtubules. 523-530 (GPPGNGKT) provides a ligand contact to ATP.

It belongs to the AAA ATPase family. Spastin subfamily. As to quaternary structure, homohexamer. The homohexamer is stabilized by ATP-binding. The homohexamer may adopt a ring conformation through which microtubules pass prior to being severed. Interacts with microtubules. Interacts with atl; may be involved in microtubule dynamics.

It localises to the membrane. Its subcellular location is the cytoplasm. The protein localises to the cytoskeleton. The protein resides in the microtubule organizing center. It is found in the centrosome. It localises to the chromosome. Its subcellular location is the lipid droplet. The enzyme catalyses n ATP + n H2O + a microtubule = n ADP + n phosphate + (n+1) alpha/beta tubulin heterodimers.. Its function is as follows. ATP-dependent microtubule severing protein. Stimulates microtubule minus-end depolymerization and poleward microtubule flux in the mitotic spindle. Regulates microtubule stability in the neuromuscular junction synapse. Involved in lipid metabolism by regulating the size and distribution of lipid droplets. Involved in axon regeneration by regulating microtubule severing. This Drosophila simulans (Fruit fly) protein is Spastin.